A 439-amino-acid chain; its full sequence is U1 small nuclear ribonucleoprotein 70 kDa (439 aa).

The residue at position 2 (Thr-2) is an N-acetylthreonine. Positions 48–79 (FEDPRDAPPPTRAETREERMERKRREKIERRQ) are disordered. Basic and acidic residues predominate over residues 60–79 (AETREERMERKRREKIERRQ). Residues 92 to 202 (HNDPNAQGDA…GGGLGGTRRG (111 aa)) form a required for interaction with U1 RNA region. Residues 103 to 181 (KTLFVARVNY…RRVLVDVERG (79 aa)) enclose the RRM domain. Lys-118 is subject to N6-acetyllysine. Tyr-126 is subject to Phosphotyrosine. The segment at 187–439 (WRPRRLGGGL…NGYLMEAAPE (253 aa)) is disordered. The segment covering 192–201 (LGGGLGGTRR) has biased composition (gly residues). Over residues 207–254 (NIRHSGRDDTSRYDERPGPSPLPHRDRDRDRERERRERSRERDKERER) the composition is skewed to basic and acidic residues. A phosphoserine mark is found at Ser-226 and Ser-268. Over residues 255–268 (RRSRSRDRRRRSRS) the composition is skewed to basic residues. Composition is skewed to basic and acidic residues over residues 269–286 (RDKE…DKDR) and 294–310 (RSRE…EELR). Ser-323 carries the post-translational modification Phosphoserine. The segment covering 346–394 (PEEKGRDRDRDRRRSHRSERERRRDRDRDRDREHKRGERGGDRGRDEAR) has biased composition (basic and acidic residues). A Glycyl lysine isopeptide (Lys-Gly) (interchain with G-Cter in SUMO2) cross-link involves residue Lys-349. Residues 395 to 410 (GGGGGGQDNGLEGLGN) are compositionally biased toward gly residues.

As to quaternary structure, component of the U1 snRNP. The U1 snRNP is composed of the U1 snRNA and the 7 core Sm proteins SNRPB, SNRPD1, SNRPD2, SNRPD3, SNRPE, SNRPF and SNRPG that assemble in a heptameric protein ring on the Sm site of the small nuclear RNA to form the core snRNP, and at least three U1 snRNP-specific proteins SNRNP70/U1-70K, SNRPA/U1-A and SNRPC/U1-C. Interacts with SCNM1. Found in a pre-mRNA splicing complex with SFRS4, SFRS5, SNRNP70, SNRPA1, SRRM1 and SRRM2. Found in a pre-mRNA exonic splicing enhancer (ESE) complex with SNRNP70, SNRPA1, SRRM1 and TRA2B/SFRS10. Interacts with dephosphorylated SFRS13A and SFPQ. Interacts with NUDT21/CPSF5, CPSF6, SCAF11, and ZRANB2. Interacts with GEMIN5. Interacts with FUS. Post-translationally, extensively phosphorylated on serine residues in the C-terminal region.

It is found in the nucleus speckle. It localises to the nucleus. Its subcellular location is the nucleoplasm. In terms of biological role, component of the spliceosomal U1 snRNP, which is essential for recognition of the pre-mRNA 5' splice-site and the subsequent assembly of the spliceosome. SNRNP70 binds to the loop I region of U1-snRNA. The protein is U1 small nuclear ribonucleoprotein 70 kDa (SNRNP70) of Bos taurus (Bovine).